The sequence spans 260 residues: Cytosolic Fe-S cluster assembly factor Nubp2 homolog 1 (260 aa).

Position 14-21 (14-21) interacts with ATP; the sequence is GKGGVGKS. [4Fe-4S] cluster-binding residues include cysteine 188 and cysteine 191.

Belongs to the Mrp/NBP35 ATP-binding proteins family. NUBP2/CFD1 subfamily. As to quaternary structure, heterotetramer of 2 Nubp1 and 2 Nubp2 chains. [4Fe-4S] cluster serves as cofactor.

Its subcellular location is the cytoplasm. Functionally, component of the cytosolic iron-sulfur (Fe/S) protein assembly (CIA) machinery. Required for maturation of extramitochondrial Fe-S proteins. The Nubp1-Nubp2 heterotetramer forms a Fe-S scaffold complex, mediating the de novo assembly of an Fe-S cluster and its transfer to target apoproteins. The sequence is that of Cytosolic Fe-S cluster assembly factor Nubp2 homolog 1 from Drosophila yakuba (Fruit fly).